The sequence spans 146 residues: UPF0756 membrane protein PTH_1817 (146 aa).

The next 4 membrane-spanning stretches (helical) occupy residues 6–26 (LLIGMAAHSSLIVIAACILLI), 46–66 (MGLTFLLLSILVPLASGKASW), 69–89 (IISSLASFSGLLAVAGGALAT), and 105–125 (IVFGLLLGSILGIVFLHGIPV).

This sequence belongs to the UPF0756 family.

The protein localises to the cell membrane. In Pelotomaculum thermopropionicum (strain DSM 13744 / JCM 10971 / SI), this protein is UPF0756 membrane protein PTH_1817.